The primary structure comprises 346 residues: Phosphoribosylformylglycinamidine cyclo-ligase (346 aa).

It belongs to the AIR synthase family.

It is found in the cytoplasm. The catalysed reaction is 2-formamido-N(1)-(5-O-phospho-beta-D-ribosyl)acetamidine + ATP = 5-amino-1-(5-phospho-beta-D-ribosyl)imidazole + ADP + phosphate + H(+). Its pathway is purine metabolism; IMP biosynthesis via de novo pathway; 5-amino-1-(5-phospho-D-ribosyl)imidazole from N(2)-formyl-N(1)-(5-phospho-D-ribosyl)glycinamide: step 2/2. This is Phosphoribosylformylglycinamidine cyclo-ligase from Brevibacillus brevis (strain 47 / JCM 6285 / NBRC 100599).